Reading from the N-terminus, the 296-residue chain is GTP-binding protein GEM (296 aa).

Disordered stretches follow at residues 1-20 (MTLNNVTMRQGTVGMQPQQQ) and 37-68 (PHQYSHRNRHSATPEDHCRRSWSSDSTDSVIS). Over residues 57–68 (SWSSDSTDSVIS) the composition is skewed to low complexity. GTP is bound by residues 82–89 (GEQGVGKS) and 191–194 (NKSD). The tract at residues 266–285 (ARRFWGKIVAKNNKNMAFKL) is calmodulin-binding.

This sequence belongs to the small GTPase superfamily. RGK family. In terms of assembly, interacts with calmodulin in a Ca(2+)-dependent manner. Binds ROCK1. In terms of processing, phosphorylated on tyrosine residues. In terms of tissue distribution, most abundant in thymus, spleen, kidney, lung, and testis. Less abundant in heart, brain, liver and skeletal muscle.

The protein localises to the cell membrane. Its function is as follows. Could be a regulatory protein, possibly participating in receptor-mediated signal transduction at the plasma membrane. Has guanine nucleotide-binding activity but undetectable intrinsic GTPase activity. This Homo sapiens (Human) protein is GTP-binding protein GEM (GEM).